The chain runs to 396 residues: MAKAKFERNKPHCNIGTIGHVDHGKTSLTAAITKVLAETGGATFTAYDQIDKAPEERARGITISTAHVEYETGNRHYAHVDCPGHADYVKNMITGAAQMDGGILVVSAADGPMPQTREHILLARQVGVPALVVFLNKVDMVDDPELLDLVEMEVRELLSSYQFPGDDIPIIKGSALCALEDKNPEIGRDAILKLMEAVDAYIPQPERPLDRPFLMPIEDVFSISGRGTVVTGRIERGEVKVGDEVEIVGLKATSKTTVTGVEMFRKLLDRGEAGDNIGALLRGTKREDVERGQVLAKPGSITPHTKFAAEAYILTKEEGGRHTPFFTNYRPQFYFRTTDVTGVVSLPEGTEMVMPGDNVSMQVELIAPIAMDEGLRFAIREGGRTVGAGVVAKISQ.

Residues 10 to 206 (KPHCNIGTIG…AVDAYIPQPE (197 aa)) enclose the tr-type G domain. The segment at 19–26 (GHVDHGKT) is G1. 19 to 26 (GHVDHGKT) contributes to the GTP binding site. Position 26 (threonine 26) interacts with Mg(2+). A G2 region spans residues 60–64 (GITIS). Positions 81–84 (DCPG) are G3. Residues 81 to 85 (DCPGH) and 136 to 139 (NKVD) contribute to the GTP site. A G4 region spans residues 136-139 (NKVD). Residues 174 to 176 (SAL) form a G5 region.

It belongs to the TRAFAC class translation factor GTPase superfamily. Classic translation factor GTPase family. EF-Tu/EF-1A subfamily. As to quaternary structure, monomer.

The protein localises to the cytoplasm. It carries out the reaction GTP + H2O = GDP + phosphate + H(+). Its function is as follows. GTP hydrolase that promotes the GTP-dependent binding of aminoacyl-tRNA to the A-site of ribosomes during protein biosynthesis. In Granulibacter bethesdensis (strain ATCC BAA-1260 / CGDNIH1), this protein is Elongation factor Tu.